Here is a 295-residue protein sequence, read N- to C-terminus: MSDYLVKALAYDGQVRAYAARTTDTVSEAQRRHQTWPTASAALGRAITAGVMMGAMLKGDDKLTIKIDGGGPIGTILVDSNAKGEVRGYVTNPHVHFDLNEHGKLDVAKAVGKNGMLTVVKDLGLRDFFTGQVPIISGELGEDFTYYFASSEQVPSSVGVGVLVNPDNTILAAGGFIIQLMPGTEEKTIEQIEQRLQTIPPVSKMVESGLTPEEILEELLGKGNVKVLETLPVSFVCRCSRERIADAIISLGPQEIQDIMEKEGYAEASCHFCNETYHFTKEELEQLKQLAEAKN.

2 disulfide bridges follow: cysteine 237/cysteine 239 and cysteine 270/cysteine 273.

This sequence belongs to the HSP33 family. In terms of processing, under oxidizing conditions two disulfide bonds are formed involving the reactive cysteines. Under reducing conditions zinc is bound to the reactive cysteines and the protein is inactive.

It is found in the cytoplasm. Its function is as follows. Redox regulated molecular chaperone. Protects both thermally unfolding and oxidatively damaged proteins from irreversible aggregation. Plays an important role in the bacterial defense system toward oxidative stress. The sequence is that of 33 kDa chaperonin from Geobacillus sp. (strain WCH70).